A 1005-amino-acid polypeptide reads, in one-letter code: MPENIIAGIPVHFPFEPYEVQRAYMEKVIMCLRDGTNGVLESPTGTGKTLSLLCASLAWIRTRQSEQQQYMQKLQLDQQKQATGGAGAGVADLNAVMGKANNWGVPKVIYASRTHSQLSQAMRELKRTAYANMKSVVLGSRDQLCIHPDVMREQGNSNKVNMCKLKVHAKTCSFQLRVESKKDHPDFRGPSIMDIEDLVKVGQRLKMCPYFASKELVNGADITFMPYNYLLDPKARKANKIELSNTIVILDEAHNIEKICEESASVQIRSSDVAMAIEDITHIMKIFTSGDAQDTGGPEEPKDFTLDDLTLLKEMLLELEKAIDGVVVDNKAEGTTYPAAHIYELLGKANFTYGNCATIVALLDKLVQYLMVASQHSTMLRKGGSFMVLADLLNIVFANKEDVMSKVHRSFKVHVEIEDNKQSKNAANSAKPQTGWLGKGNNAASSVTKAAKIINFWCFNPGFGMEQLLNAHVRSVILTSGTLAPLKPLIAELAIPVAQHLENPHIVDRSQVYVKIIGTGPDREQLISNYKNRDNPKYISSLGQTILNVSRIVPDGLLVFFPSYPMLNQCVDAWQASGLWADISCRKPIFLEPRGKDQFTSTMEEFYQAIRDSKGACFMAVCRGKVSEGLDFADRNGRAVIITGLPFPPLKDPKVVLKRRYLETNRTKENQLLSGQEWYNLDATRAVNQAIGRVIRHRNDYGAILLCDARFQDMSQVQQLSKWIRGHLGARPQSSPFGPIVRELRQFFKHAEQTMAQPEERVVEPLLQTVCKEEQPTLACASSSQITIKREPGTGGTKFQLASELAAQAEMANTIKTWTPADYANAAGSSTLGRRAPDAMDFMSRLNANVTSIDFNSADAGQDLVKIHKRERSSPTASESSMIAKKRYKLIGNGPLKTEPSEPATTSSSFCPTPAQSQLKEAPESRADFLREVRSVIDCDQFRSFGKALLAYKTGGDGCFETLMVLLLDVLGAPQLRYLLLGMRRYLKNEHKLEFDVRLASFQAT.

One can recognise a Helicase ATP-binding domain in the interval 7 to 322 (AGIPVHFPFE…KEMLLELEKA (316 aa)). 42-49 (SPTGTGKT) is a binding site for ATP. Positions 145, 163, 172, and 208 each coordinate [4Fe-4S] cluster. Positions 251–254 (DEAH) match the DEAH box motif. Thr-876 carries the phosphothreonine modification. A disordered region spans residues 893–917 (NGPLKTEPSEPATTSSSFCPTPAQS).

The protein belongs to the helicase family. RAD3/XPD subfamily.

It localises to the nucleus. The enzyme catalyses ATP + H2O = ADP + phosphate + H(+). Functionally, a probable ATP-dependent DNA helicase implicated in DNA repair and the maintenance of genomic stability. Acts as an anti-recombinase to counteract toxic recombination and limit crossover during meiosis. Regulates meiotic recombination and crossover homeostasis by physically dissociating strand invasion events and thereby promotes noncrossover repair by meiotic synthesis dependent strand annealing (SDSA) as well as disassembly of D loop recombination intermediates. This chain is Regulator of telomere elongation helicase 1 homolog, found in Drosophila virilis (Fruit fly).